The following is a 480-amino-acid chain: Acetyl-coenzyme A carboxylase carboxyl transferase subunit beta, chloroplastic (480 aa).

Positions 25 to 48 are disordered; it reads TSSLGPIENASESKDPNINDTDKN. The span at 35 to 47 shows a compositional bias: basic and acidic residues; that stretch reads SESKDPNINDTDK. The region spanning 216–480 is the CoA carboxyltransferase N-terminal domain; sequence LWVQCENCYG…LHTFFPLNQN (265 aa). C220, C223, C239, and C242 together coordinate Zn(2+). A C4-type zinc finger spans residues 220–242; the sequence is CENCYGLNYKKFFKSKMNLCEQC.

Belongs to the AccD/PCCB family. In terms of assembly, acetyl-CoA carboxylase is a heterohexamer composed of biotin carboxyl carrier protein, biotin carboxylase and 2 subunits each of ACCase subunit alpha and ACCase plastid-coded subunit beta (accD). The cofactor is Zn(2+).

The protein localises to the plastid. It is found in the chloroplast stroma. The catalysed reaction is N(6)-carboxybiotinyl-L-lysyl-[protein] + acetyl-CoA = N(6)-biotinyl-L-lysyl-[protein] + malonyl-CoA. It functions in the pathway lipid metabolism; malonyl-CoA biosynthesis; malonyl-CoA from acetyl-CoA: step 1/1. Functionally, component of the acetyl coenzyme A carboxylase (ACC) complex. Biotin carboxylase (BC) catalyzes the carboxylation of biotin on its carrier protein (BCCP) and then the CO(2) group is transferred by the transcarboxylase to acetyl-CoA to form malonyl-CoA. The protein is Acetyl-coenzyme A carboxylase carboxyl transferase subunit beta, chloroplastic of Helianthus annuus (Common sunflower).